The chain runs to 91 residues: Small ribosomal subunit protein uS19 (91 aa).

This sequence belongs to the universal ribosomal protein uS19 family.

Protein S19 forms a complex with S13 that binds strongly to the 16S ribosomal RNA. The chain is Small ribosomal subunit protein uS19 from Aromatoleum aromaticum (strain DSM 19018 / LMG 30748 / EbN1) (Azoarcus sp. (strain EbN1)).